The sequence spans 212 residues: Pyridoxine/pyridoxamine 5'-phosphate oxidase (212 aa).

Residues 8–11 (RREY) and Lys66 each bind substrate. FMN is bound by residues 61–66 (RIVLLK), 76–77 (FT), Arg82, Lys83, and Gln105. Substrate is bound by residues Tyr123, Arg127, and Ser131. Residues 140 to 141 (QS) and Trp185 contribute to the FMN site. 191–193 (RLH) is a substrate binding site. Arg195 contacts FMN.

Belongs to the pyridoxamine 5'-phosphate oxidase family. Homodimer. FMN is required as a cofactor.

The enzyme catalyses pyridoxamine 5'-phosphate + O2 + H2O = pyridoxal 5'-phosphate + H2O2 + NH4(+). The catalysed reaction is pyridoxine 5'-phosphate + O2 = pyridoxal 5'-phosphate + H2O2. It participates in cofactor metabolism; pyridoxal 5'-phosphate salvage; pyridoxal 5'-phosphate from pyridoxamine 5'-phosphate: step 1/1. Its pathway is cofactor metabolism; pyridoxal 5'-phosphate salvage; pyridoxal 5'-phosphate from pyridoxine 5'-phosphate: step 1/1. Functionally, catalyzes the oxidation of either pyridoxine 5'-phosphate (PNP) or pyridoxamine 5'-phosphate (PMP) into pyridoxal 5'-phosphate (PLP). The protein is Pyridoxine/pyridoxamine 5'-phosphate oxidase of Shewanella halifaxensis (strain HAW-EB4).